The chain runs to 240 residues: Putative N-acetylmannosamine-6-phosphate 2-epimerase (240 aa).

Belongs to the NanE family.

It carries out the reaction an N-acyl-D-glucosamine 6-phosphate = an N-acyl-D-mannosamine 6-phosphate. It participates in amino-sugar metabolism; N-acetylneuraminate degradation; D-fructose 6-phosphate from N-acetylneuraminate: step 3/5. In terms of biological role, converts N-acetylmannosamine-6-phosphate (ManNAc-6-P) to N-acetylglucosamine-6-phosphate (GlcNAc-6-P). The chain is Putative N-acetylmannosamine-6-phosphate 2-epimerase from Vibrio cholerae serotype O1 (strain ATCC 39541 / Classical Ogawa 395 / O395).